Reading from the N-terminus, the 627-residue chain is 5-aminolevulinate synthase, non-specific, mitochondrial (627 aa).

Residues 1 to 58 (MDVIVRRCPFLARVPQAFFQQSKKSLAVYAQRCPFMMELASKPMAPSLARALCSSSSS) constitute a mitochondrion transit peptide. Substrate-binding residues include arginine 204, serine 321, and lysine 340. Residues serine 373, histidine 401, and threonine 429 each coordinate pyridoxal 5'-phosphate. Residue lysine 432 is part of the active site. The residue at position 432 (lysine 432) is an N6-(pyridoxal phosphate)lysine. Residues threonine 461 and threonine 462 each coordinate pyridoxal 5'-phosphate. A substrate-binding site is contributed by threonine 549.

Belongs to the class-II pyridoxal-phosphate-dependent aminotransferase family. In terms of assembly, homodimer. Pyridoxal 5'-phosphate serves as cofactor.

It localises to the mitochondrion inner membrane. The catalysed reaction is succinyl-CoA + glycine + H(+) = 5-aminolevulinate + CO2 + CoA. It functions in the pathway porphyrin-containing compound metabolism; protoporphyrin-IX biosynthesis; 5-aminolevulinate from glycine: step 1/1. Catalyzes the pyridoxal 5'-phosphate (PLP)-dependent condensation of succinyl-CoA and glycine to form aminolevulinic acid (ALA), with CoA and CO2 as by-products. This chain is 5-aminolevulinate synthase, non-specific, mitochondrial (alas1), found in Opsanus tau (Oyster toadfish).